We begin with the raw amino-acid sequence, 319 residues long: Acetyl-coenzyme A carboxylase carboxyl transferase subunit alpha (319 aa).

A CoA carboxyltransferase C-terminal domain is found at 39–293 (RLQKKSNDLT…KAVLEKQLHE (255 aa)).

Belongs to the AccA family. As to quaternary structure, acetyl-CoA carboxylase is a heterohexamer composed of biotin carboxyl carrier protein (AccB), biotin carboxylase (AccC) and two subunits each of ACCase subunit alpha (AccA) and ACCase subunit beta (AccD).

The protein resides in the cytoplasm. It carries out the reaction N(6)-carboxybiotinyl-L-lysyl-[protein] + acetyl-CoA = N(6)-biotinyl-L-lysyl-[protein] + malonyl-CoA. Its pathway is lipid metabolism; malonyl-CoA biosynthesis; malonyl-CoA from acetyl-CoA: step 1/1. Functionally, component of the acetyl coenzyme A carboxylase (ACC) complex. First, biotin carboxylase catalyzes the carboxylation of biotin on its carrier protein (BCCP) and then the CO(2) group is transferred by the carboxyltransferase to acetyl-CoA to form malonyl-CoA. This Neisseria gonorrhoeae (strain ATCC 700825 / FA 1090) protein is Acetyl-coenzyme A carboxylase carboxyl transferase subunit alpha.